The following is a 317-amino-acid chain: Protein-methionine-sulfoxide reductase catalytic subunit MsrP (317 aa).

The segment at residues 1 to 40 (MKKLTSNDVTPEEIFYQRRKIIKAFGLSAVATALPTFSFA) is a signal peptide (tat-type signal). Mo-molybdopterin is bound by residues N71, 74-75 (YE), C129, T164, N216, R221, and 232-234 (SIK).

The protein belongs to the MsrP family. In terms of assembly, heterodimer of a catalytic subunit (MsrP) and a heme-binding subunit (MsrQ). It depends on Mo-molybdopterin as a cofactor. Predicted to be exported by the Tat system. The position of the signal peptide cleavage has not been experimentally proven.

The protein resides in the periplasm. The enzyme catalyses L-methionyl-[protein] + a quinone + H2O = L-methionyl-(S)-S-oxide-[protein] + a quinol. The catalysed reaction is L-methionyl-[protein] + a quinone + H2O = L-methionyl-(R)-S-oxide-[protein] + a quinol. Part of the MsrPQ system that repairs oxidized periplasmic proteins containing methionine sulfoxide residues (Met-O), using respiratory chain electrons. Thus protects these proteins from oxidative-stress damage caused by reactive species of oxygen and chlorine generated by the host defense mechanisms. MsrPQ is essential for the maintenance of envelope integrity under bleach stress, rescuing a wide series of structurally unrelated periplasmic proteins from methionine oxidation. The catalytic subunit MsrP is non-stereospecific, being able to reduce both (R-) and (S-) diastereoisomers of methionine sulfoxide. The sequence is that of Protein-methionine-sulfoxide reductase catalytic subunit MsrP from Histophilus somni (strain 2336) (Haemophilus somnus).